The sequence spans 519 residues: Cytosol aminopeptidase (519 aa).

A Phosphoserine modification is found at S42. At K45 the chain carries N6-succinyllysine. A Phosphoserine modification is found at S54. N6-succinyllysine occurs at positions 61 and 103. S180 and S194 each carry phosphoserine. Residues L202, M203, and T205 each contribute to the Zn(2+) site. K221 bears the N6-acetyllysine; alternate mark. The residue at position 221 (K221) is an N6-succinyllysine; alternate. S238 carries the post-translational modification Phosphoserine. Zn(2+)-binding residues include K282 and D287. K282, D287, S292, and K294 together coordinate substrate. Residue D287 participates in Mg(2+) binding. Residue K294 is part of the active site. Zn(2+)-binding residues include R303, D305, D364, and E366. The substrate site is built by D305 and D364. Mg(2+) is bound by residues D364 and E366. R368 is an active-site residue. K455 is modified (N6-acetyllysine; alternate). Position 455 is an N6-succinyllysine; alternate (K455). K476 carries the N6-succinyllysine modification. At K489 the chain carries N6-acetyllysine; alternate. K489 is modified (N6-succinyllysine; alternate).

This sequence belongs to the peptidase M17 family. Homohexamer. Zn(2+) serves as cofactor. It depends on Mn(2+) as a cofactor.

The protein localises to the cytoplasm. The catalysed reaction is Release of an N-terminal amino acid, Xaa-|-Yaa-, in which Xaa is preferably Leu, but may be other amino acids including Pro although not Arg or Lys, and Yaa may be Pro. Amino acid amides and methyl esters are also readily hydrolyzed, but rates on arylamides are exceedingly low.. It catalyses the reaction an S-substituted L-cysteinylglycine + H2O = an S-substituted L-cysteine + glycine. The enzyme catalyses L-cysteinylglycine + H2O = L-cysteine + glycine. It carries out the reaction S-benzyl-L-cysteinylglycine + H2O = S-benzyl-L-cysteine + glycine. The catalysed reaction is Release of N-terminal proline from a peptide.. Functionally, cytosolic metallopeptidase that catalyzes the removal of unsubstituted N-terminal hydrophobic amino acids from various peptides. The presence of Zn(2+) ions is essential for the peptidase activity, and the association with other cofactors can modulate the substrate spectificity of the enzyme. For instance, in the presence of Mn(2+), it displays a specific Cys-Gly hydrolyzing activity of Cys-Gly-S-conjugates. Involved in the metabolism of glutathione and in the degradation of glutathione S-conjugates, which may play a role in the control of the cell redox status. The polypeptide is Cytosol aminopeptidase (Homo sapiens (Human)).